The sequence spans 366 residues: Carbamoyl phosphate synthase small chain (366 aa).

Residues 1-171 (MQSKRYLVLE…KTPYVSTGKD (171 aa)) are CPSase. L-glutamine is bound by residues Ser47, Gly221, and Gly223. The Glutamine amidotransferase type-1 domain occupies 173–360 (SVVLVDFGKK…VAMMTNFKEK (188 aa)). Catalysis depends on Cys248, which acts as the Nucleophile. Residues Leu249, Gln252, Asn290, Gly292, and Tyr293 each contribute to the L-glutamine site. Active-site residues include His333 and Glu335.

It belongs to the CarA family. As to quaternary structure, composed of two chains; the small (or glutamine) chain promotes the hydrolysis of glutamine to ammonia, which is used by the large (or ammonia) chain to synthesize carbamoyl phosphate. Tetramer of heterodimers (alpha,beta)4.

The enzyme catalyses hydrogencarbonate + L-glutamine + 2 ATP + H2O = carbamoyl phosphate + L-glutamate + 2 ADP + phosphate + 2 H(+). The catalysed reaction is L-glutamine + H2O = L-glutamate + NH4(+). The protein operates within amino-acid biosynthesis; L-arginine biosynthesis; carbamoyl phosphate from bicarbonate: step 1/1. It functions in the pathway pyrimidine metabolism; UMP biosynthesis via de novo pathway; (S)-dihydroorotate from bicarbonate: step 1/3. Its function is as follows. Small subunit of the glutamine-dependent carbamoyl phosphate synthetase (CPSase). CPSase catalyzes the formation of carbamoyl phosphate from the ammonia moiety of glutamine, carbonate, and phosphate donated by ATP, constituting the first step of 2 biosynthetic pathways, one leading to arginine and/or urea and the other to pyrimidine nucleotides. The small subunit (glutamine amidotransferase) binds and cleaves glutamine to supply the large subunit with the substrate ammonia. This is Carbamoyl phosphate synthase small chain from Staphylococcus aureus (strain COL).